The following is a 290-amino-acid chain: Virginiamycin B lyase (290 aa).

H226 serves as a coordination point for substrate. Residue E265 coordinates Mg(2+). H267 (proton acceptor) is an active-site residue. Residue E282 coordinates Mg(2+).

This sequence belongs to the Vgb family. As to quaternary structure, monomer. It depends on Mg(2+) as a cofactor.

Functionally, inactivates the type B streptogramin antibiotics by linearizing the lactone ring at the ester linkage, generating a free phenylglycine carboxylate and converting the threonyl moiety into 2-amino-butenoic acid. The protein is Virginiamycin B lyase of Mycolicibacterium vanbaalenii (strain DSM 7251 / JCM 13017 / BCRC 16820 / KCTC 9966 / NRRL B-24157 / PYR-1) (Mycobacterium vanbaalenii).